The sequence spans 160 residues: Large ribosomal subunit protein eL21 (160 aa).

Composition is skewed to basic and acidic residues over residues 112 to 123 (NDQKKKEAKEKG) and 136 to 146 (REAHFVRTNGK). The interval 112-146 (NDQKKKEAKEKGTWVQLNGQPAPPREAHFVRTNGK) is disordered.

The protein belongs to the eukaryotic ribosomal protein eL21 family. As to quaternary structure, component of the large ribosomal subunit.

The protein resides in the cytoplasm. It localises to the cytosol. The protein localises to the endoplasmic reticulum. In terms of biological role, component of the large ribosomal subunit. The ribosome is a large ribonucleoprotein complex responsible for the synthesis of proteins in the cell. This Rattus norvegicus (Rat) protein is Large ribosomal subunit protein eL21 (Rpl21).